The chain runs to 316 residues: D-alanine--D-alanine ligase (316 aa).

The 197-residue stretch at 107 to 303 (KEVFAARGLT…FEDLVERILI (197 aa)) folds into the ATP-grasp domain. 133-188 (AEGFGYPVVVKPSQEGSSVGVSIVKSPEELPSALELAFRYDDDILVERFIKGREIQ) serves as a coordination point for ATP. Mg(2+) contacts are provided by aspartate 256, glutamate 269, and asparagine 271.

The protein belongs to the D-alanine--D-alanine ligase family. Mg(2+) is required as a cofactor. It depends on Mn(2+) as a cofactor.

The protein localises to the cytoplasm. The enzyme catalyses 2 D-alanine + ATP = D-alanyl-D-alanine + ADP + phosphate + H(+). It participates in cell wall biogenesis; peptidoglycan biosynthesis. In terms of biological role, cell wall formation. The chain is D-alanine--D-alanine ligase from Geobacter sulfurreducens (strain ATCC 51573 / DSM 12127 / PCA).